The sequence spans 158 residues: Transcription factor BTF3 homolog 4 (158 aa).

One can recognise an NAC-A/B domain in the interval 33 to 98 (TADDKKLQSS…AEAKPITEML (66 aa)). A disordered region spans residues 124-158 (VLDSKAPKSEDIDEEDDDVPDLAENFDEASKNEAN). Residues 134–150 (DIDEEDDDVPDLAENFD) are compositionally biased toward acidic residues.

The protein belongs to the NAC-beta family.

The protein is Transcription factor BTF3 homolog 4 (BTF3L4) of Gallus gallus (Chicken).